We begin with the raw amino-acid sequence, 295 residues long: Fatty acyl-CoA reductase (295 aa).

21-28 (TGASSGIG) is an NADP(+) binding site. Ser-153 is a binding site for substrate. Catalysis depends on Tyr-166, which acts as the Proton acceptor.

Belongs to the short-chain dehydrogenases/reductases (SDR) family.

The enzyme catalyses hexadecanal + NADP(+) + CoA = hexadecanoyl-CoA + NADPH + H(+). Its function is as follows. Catalyzes the NADPH-dependent reduction of long chain acyl-CoA (with chain lengths of 14 to 22 carbons) to the corresponding aldehyde. The sequence is that of Fatty acyl-CoA reductase (acr1) from Acinetobacter baylyi (strain ATCC 33305 / BD413 / ADP1).